Reading from the N-terminus, the 307-residue chain is Protease HtpX homolog 1 (307 aa).

A run of 2 helical transmembrane segments spans residues 7 to 27 and 38 to 60; these read LKTL…IITY and IFTA…YLVG. H133 is a binding site for Zn(2+). E134 is a catalytic residue. H137 contacts Zn(2+). Transmembrane regions (helical) follow at residues 145 to 165 and 180 to 200; these read IGMA…FLLF and LILG…TFLL. E212 is a Zn(2+) binding site.

Belongs to the peptidase M48B family. Requires Zn(2+) as cofactor.

It localises to the cell membrane. This is Protease HtpX homolog 1 from Sulfolobus acidocaldarius (strain ATCC 33909 / DSM 639 / JCM 8929 / NBRC 15157 / NCIMB 11770).